The primary structure comprises 295 residues: Glycine--tRNA ligase alpha subunit (295 aa).

This sequence belongs to the class-II aminoacyl-tRNA synthetase family. As to quaternary structure, tetramer of two alpha and two beta subunits.

Its subcellular location is the cytoplasm. The enzyme catalyses tRNA(Gly) + glycine + ATP = glycyl-tRNA(Gly) + AMP + diphosphate. This Shouchella clausii (strain KSM-K16) (Alkalihalobacillus clausii) protein is Glycine--tRNA ligase alpha subunit.